An 89-amino-acid chain; its full sequence is Small ribosomal subunit protein uS15 (89 aa).

It belongs to the universal ribosomal protein uS15 family. In terms of assembly, part of the 30S ribosomal subunit. Forms a bridge to the 50S subunit in the 70S ribosome, contacting the 23S rRNA.

Functionally, one of the primary rRNA binding proteins, it binds directly to 16S rRNA where it helps nucleate assembly of the platform of the 30S subunit by binding and bridging several RNA helices of the 16S rRNA. Forms an intersubunit bridge (bridge B4) with the 23S rRNA of the 50S subunit in the ribosome. This is Small ribosomal subunit protein uS15 from Gluconobacter oxydans (strain 621H) (Gluconobacter suboxydans).